A 331-amino-acid chain; its full sequence is Probable 5-dehydro-4-deoxyglucarate dehydratase 2 (331 aa).

Residues 1 to 23 (MSADTDTDTDTGTGTGPDTDTGT) form a disordered region. A compositionally biased stretch (low complexity) spans 10–23 (DTGTGTGPDTDTGT).

Belongs to the DapA family.

The enzyme catalyses 5-dehydro-4-deoxy-D-glucarate + H(+) = 2,5-dioxopentanoate + CO2 + H2O. The protein operates within carbohydrate acid metabolism; D-glucarate degradation; 2,5-dioxopentanoate from D-glucarate: step 2/2. In Streptomyces avermitilis (strain ATCC 31267 / DSM 46492 / JCM 5070 / NBRC 14893 / NCIMB 12804 / NRRL 8165 / MA-4680), this protein is Probable 5-dehydro-4-deoxyglucarate dehydratase 2.